Consider the following 184-residue polypeptide: Peptide deformylase 2 (184 aa).

Residues C110 and H153 each coordinate Fe cation. The active site involves E154. Fe cation is bound at residue H157.

It belongs to the polypeptide deformylase family. Fe(2+) serves as cofactor.

The catalysed reaction is N-terminal N-formyl-L-methionyl-[peptide] + H2O = N-terminal L-methionyl-[peptide] + formate. Functionally, removes the formyl group from the N-terminal Met of newly synthesized proteins. Requires at least a dipeptide for an efficient rate of reaction. N-terminal L-methionine is a prerequisite for activity but the enzyme has broad specificity at other positions. The chain is Peptide deformylase 2 (defB) from Bacillus subtilis (strain 168).